A 231-amino-acid polypeptide reads, in one-letter code: UPF0702 transmembrane protein YetF (231 aa).

The next 3 helical transmembrane spans lie at 5–25 (LSVA…LKLL), 33–53 (ITPF…NAVY), and 59–79 (IKEI…IEFI).

The protein belongs to the UPF0702 family.

The protein resides in the cell membrane. This Bacillus subtilis (strain 168) protein is UPF0702 transmembrane protein YetF (yetF).